Here is a 267-residue protein sequence, read N- to C-terminus: Tryptophan synthase alpha chain (267 aa).

Residues glutamate 47 and aspartate 58 each act as proton acceptor in the active site.

It belongs to the TrpA family. In terms of assembly, tetramer of two alpha and two beta chains.

It catalyses the reaction (1S,2R)-1-C-(indol-3-yl)glycerol 3-phosphate + L-serine = D-glyceraldehyde 3-phosphate + L-tryptophan + H2O. Its pathway is amino-acid biosynthesis; L-tryptophan biosynthesis; L-tryptophan from chorismate: step 5/5. In terms of biological role, the alpha subunit is responsible for the aldol cleavage of indoleglycerol phosphate to indole and glyceraldehyde 3-phosphate. The sequence is that of Tryptophan synthase alpha chain from Prosthecochloris aestuarii (strain DSM 271 / SK 413).